A 416-amino-acid polypeptide reads, in one-letter code: 3-isopropylmalate dehydratase large subunit 2 (416 aa).

The [4Fe-4S] cluster site is built by C296, C356, and C359.

This sequence belongs to the aconitase/IPM isomerase family. LeuC type 2 subfamily. In terms of assembly, heterodimer of LeuC and LeuD. [4Fe-4S] cluster serves as cofactor.

The catalysed reaction is (2R,3S)-3-isopropylmalate = (2S)-2-isopropylmalate. It participates in amino-acid biosynthesis; L-leucine biosynthesis; L-leucine from 3-methyl-2-oxobutanoate: step 2/4. Catalyzes the isomerization between 2-isopropylmalate and 3-isopropylmalate, via the formation of 2-isopropylmaleate. In Archaeoglobus fulgidus (strain ATCC 49558 / DSM 4304 / JCM 9628 / NBRC 100126 / VC-16), this protein is 3-isopropylmalate dehydratase large subunit 2.